The following is a 62-amino-acid chain: Large ribosomal subunit protein uL30 (62 aa).

It belongs to the universal ribosomal protein uL30 family. In terms of assembly, part of the 50S ribosomal subunit.

The polypeptide is Large ribosomal subunit protein uL30 (Shewanella frigidimarina (strain NCIMB 400)).